A 55-amino-acid polypeptide reads, in one-letter code: Large ribosomal subunit protein bL33 (55 aa).

The protein belongs to the bacterial ribosomal protein bL33 family.

The protein is Large ribosomal subunit protein bL33 of Methylobacterium radiotolerans (strain ATCC 27329 / DSM 1819 / JCM 2831 / NBRC 15690 / NCIMB 10815 / 0-1).